Here is a 399-residue protein sequence, read N- to C-terminus: Stomatin-like protein 1 (399 aa).

A Tyrosine-type lysosomal sorting signal motif is present at residues 6-10; sequence GYRAL. Residue Ser-28 is modified to Phosphoserine. Residues 58–78 traverse the membrane as a helical; Signal-anchor for type III membrane protein segment; that stretch reads LVSVLGFLLLLLTFPISGWFA. Residues 79–399 are Cytoplasmic-facing; sequence LKIVPTYERM…KLEAVLKALK (321 aa). Residues 288 to 399 form the SCP2 domain; it reads KQPVAEGLLT…KLEAVLKALK (112 aa).

It belongs to the band 7/mec-2 family. As to quaternary structure, interacts with STOM; may redistribute STOM from the plasma membrane to late endosomes. In terms of tissue distribution, expressed in dorsal root ganglion neurons.

Its subcellular location is the membrane. The protein localises to the cytoplasmic vesicle. The protein resides in the cell membrane. It localises to the late endosome membrane. It is found in the membrane raft. May play a role in cholesterol transfer to late endosomes. May play a role in modulating membrane acid-sensing ion channels. Can specifically inhibit proton-gated current of ASIC1 isoform 1. Can increase inactivation speed of ASIC3. May be involved in regulation of proton sensing in dorsal root ganglions. The chain is Stomatin-like protein 1 (Stoml1) from Mus musculus (Mouse).